Reading from the N-terminus, the 215-residue chain is Protein GrpE (215 aa).

Polar residues predominate over residues 1–28 (MKHTSDTPSNSDMPSDSQATQPNASATG). The interval 1–52 (MKHTSDTPSNSDMPSDSQATQPNASATGQAAHAYSSQAQRASADAQAVAGDE) is disordered. Positions 29-52 (QAAHAYSSQAQRASADAQAVAGDE) are enriched in low complexity.

Belongs to the GrpE family. As to quaternary structure, homodimer.

The protein resides in the cytoplasm. Participates actively in the response to hyperosmotic and heat shock by preventing the aggregation of stress-denatured proteins, in association with DnaK and GrpE. It is the nucleotide exchange factor for DnaK and may function as a thermosensor. Unfolded proteins bind initially to DnaJ; upon interaction with the DnaJ-bound protein, DnaK hydrolyzes its bound ATP, resulting in the formation of a stable complex. GrpE releases ADP from DnaK; ATP binding to DnaK triggers the release of the substrate protein, thus completing the reaction cycle. Several rounds of ATP-dependent interactions between DnaJ, DnaK and GrpE are required for fully efficient folding. The chain is Protein GrpE from Ralstonia pickettii (strain 12J).